The following is a 51-amino-acid chain: Basic phospholipase A2 homolog BmatTX-I (51 aa).

An intrachain disulfide couples Cys28 to Cys44.

In terms of assembly, monomer. Expressed by the venom gland.

It is found in the secreted. Its function is as follows. Snake venom phospholipase A2 homolog that lacks enzymatic activity. Shows high myotoxic activity, neutrophile activation (demonstrated by activation induction of IL-1beta production), slight cytotoxicity against Jurkat (leukemia T) and SK-BR-3 (breast adenocarcinoma) tumor cell lines, and slight antiparasitic activity against promastigote forms of Leishmania amazonensis. A model of myotoxic mechanism has been proposed: an apo Lys49-PLA2 is activated by the entrance of a hydrophobic molecule (e.g. fatty acid) at the hydrophobic channel of the protein leading to a reorientation of a monomer. This reorientation causes a transition between 'inactive' to 'active' states, causing alignment of C-terminal and membrane-docking sites (MDoS) side-by-side and putting the membrane-disruption sites (MDiS) in the same plane, exposed to solvent and in a symmetric position for both monomers. The MDoS region stabilizes the toxin on membrane by the interaction of charged residues with phospholipid head groups. Subsequently, the MDiS region destabilizes the membrane with penetration of hydrophobic residues. This insertion causes a disorganization of the membrane, allowing an uncontrolled influx of ions (i.e. calcium and sodium), and eventually triggering irreversible intracellular alterations and cell death. This is Basic phospholipase A2 homolog BmatTX-I from Bothrops mattogrossensis (Pitviper).